The chain runs to 301 residues: Asialoglycoprotein receptor 2 (301 aa).

The tract at residues 1 to 29 is disordered; it reads MEKDFQDIQQLDSEENDHQLIGDEEQGSH. The Cytoplasmic segment spans residues 1 to 58; sequence MEKDFQDIQQLDSEENDHQLIGDEEQGSHVQNLRTENPRWGGQPPSRPFPQRLCSKFR. Position 13 is a phosphoserine (Ser13). Residue Cys54 is the site of S-palmitoyl cysteine attachment. Residues 59 to 79 form a helical; Signal-anchor for type II membrane protein membrane-spanning segment; that stretch reads LSLLALAFNILLLVVICVVSS. The Extracellular portion of the chain corresponds to 80–301; the sequence is QSMQLQKEFW…ACERKRDITY (222 aa). N-linked (GlcNAc...) asparagine glycans are attached at residues Asn97, Asn119, and Asn165. Residues 169–295 form the C-type lectin domain; that stretch reads CCPVNWVEFG…QQVNRWACER (127 aa). Intrachain disulfides connect Cys170/Cys181, Cys198/Cys293, and Cys271/Cys285.

As to quaternary structure, interacts with LASS2. In terms of tissue distribution, expressed exclusively in hepatic parenchymal cells.

It is found in the membrane. In terms of biological role, mediates the endocytosis of plasma glycoproteins to which the terminal sialic acid residue on their complex carbohydrate moieties has been removed. The receptor recognizes terminal galactose and N-acetylgalactosamine units. After ligand binding to the receptor, the resulting complex is internalized and transported to a sorting organelle, where receptor and ligand are disassociated. The receptor then returns to the cell membrane surface. This chain is Asialoglycoprotein receptor 2 (Asgr2), found in Rattus norvegicus (Rat).